The chain runs to 332 residues: Ketol-acid reductoisomerase (NADP(+)) (332 aa).

One can recognise a KARI N-terminal Rossmann domain in the interval Ala-2–Thr-182. NADP(+) is bound by residues Tyr-25 to Gln-28, Ser-53, and Asp-83 to Gln-86. Residue His-108 is part of the active site. Position 134 (Gly-134) interacts with NADP(+). The 146-residue stretch at Thr-183–Gly-328 folds into the KARI C-terminal knotted domain. Residues Asp-191, Glu-195, Glu-227, and Glu-231 each contribute to the Mg(2+) site. Ser-252 contacts substrate.

It belongs to the ketol-acid reductoisomerase family. The cofactor is Mg(2+).

It carries out the reaction (2R)-2,3-dihydroxy-3-methylbutanoate + NADP(+) = (2S)-2-acetolactate + NADPH + H(+). The enzyme catalyses (2R,3R)-2,3-dihydroxy-3-methylpentanoate + NADP(+) = (S)-2-ethyl-2-hydroxy-3-oxobutanoate + NADPH + H(+). Its pathway is amino-acid biosynthesis; L-isoleucine biosynthesis; L-isoleucine from 2-oxobutanoate: step 2/4. It functions in the pathway amino-acid biosynthesis; L-valine biosynthesis; L-valine from pyruvate: step 2/4. Its function is as follows. Involved in the biosynthesis of branched-chain amino acids (BCAA). Catalyzes an alkyl-migration followed by a ketol-acid reduction of (S)-2-acetolactate (S2AL) to yield (R)-2,3-dihydroxy-isovalerate. In the isomerase reaction, S2AL is rearranged via a Mg-dependent methyl migration to produce 3-hydroxy-3-methyl-2-ketobutyrate (HMKB). In the reductase reaction, this 2-ketoacid undergoes a metal-dependent reduction by NADPH to yield (R)-2,3-dihydroxy-isovalerate. The chain is Ketol-acid reductoisomerase (NADP(+)) from Sulfolobus acidocaldarius (strain ATCC 33909 / DSM 639 / JCM 8929 / NBRC 15157 / NCIMB 11770).